The chain runs to 64 residues: Large ribosomal subunit protein bL35 (64 aa).

Positions 1-15 (MPKQKSHSGASKRFR) are enriched in basic residues. A disordered region spans residues 1-22 (MPKQKSHSGASKRFRVTGSGKV).

It belongs to the bacterial ribosomal protein bL35 family.

In Frankia casuarinae (strain DSM 45818 / CECT 9043 / HFP020203 / CcI3), this protein is Large ribosomal subunit protein bL35.